The sequence spans 244 residues: Thiol S-methyltransferase TMT1B (244 aa).

Positions 1–23 (MDILVPLLQLLVLLLTLPLHLMA) are cleaved as a signal peptide.

The protein belongs to the methyltransferase superfamily. Expressed in the liver.

It is found in the endoplasmic reticulum membrane. It localises to the lipid droplet. The protein resides in the microsome. The protein localises to the cytoplasm. Its subcellular location is the cytosol. It catalyses the reaction a thiol + S-adenosyl-L-methionine = a methyl thioether + S-adenosyl-L-homocysteine + H(+). Functionally, thiol S-methyltransferase that catalyzes the transfer of a methyl group from S-adenosyl-L-methionine to alkyl and phenolic thiol-containing acceptor substrates. Together with TMT1B accounts for most of S-thiol methylation activity in the endoplasmic reticulum of hepatocytes. Selectively methylates S-centered nucleophiles from metabolites such as hydrogen sulfide and dithiothreitol. This chain is Thiol S-methyltransferase TMT1B, found in Homo sapiens (Human).